A 533-amino-acid chain; its full sequence is Probable ADP-ribosylation factor-binding protein C25H2.16c (533 aa).

The 137-residue stretch at 15–151 (ATEPYAFEPD…LLSYKGYTFP (137 aa)) folds into the VHS domain. The GAT domain occupies 178-305 (REAMSAKLQE…LLTQYDHLLE (128 aa)). Ser320 is subject to Phosphoserine. Positions 417 to 532 (NNFTSTCAFE…EYTGQSSIRL (116 aa)) constitute a GAE domain.

This sequence belongs to the GGA protein family.

It is found in the golgi apparatus. It localises to the trans-Golgi network. Its function is as follows. May play a role in the regulation of membrane traffic through the trans-Golgi network. The polypeptide is Probable ADP-ribosylation factor-binding protein C25H2.16c (Schizosaccharomyces pombe (strain 972 / ATCC 24843) (Fission yeast)).